Here is a 491-residue protein sequence, read N- to C-terminus: G2/mitotic-specific cyclin-2 (491 aa).

S2 is subject to N-acetylserine. Disordered regions lie at residues 59–107 (EGSR…DPSS) and 164–184 (HPARSQLQVRNTESETDSGKK). Residues 67 to 77 (TRESVSRSTAA) are compositionally biased toward polar residues.

Belongs to the cyclin family. Cyclin AB subfamily. Interacts with NAP1.

Essential for the control of the cell cycle at the G2/M (mitosis) transition. Interacts with the CDC2 protein kinase to form MPF. G2/M cyclins accumulate steadily during G2 and are abruptly destroyed at mitosis. The sequence is that of G2/mitotic-specific cyclin-2 (CLB2) from Saccharomyces cerevisiae (strain ATCC 204508 / S288c) (Baker's yeast).